The following is a 129-amino-acid chain: MGRLFVLTLEGKIYSCKHCGTHLALSENIVSKSFHCKHGKAYLFSKVVNVTSGEIENRMMMTGMHTVADIFCVCCGSIVGWKYETAHEKSQKYKEGKSVLERFKITGPDGSHYWASHDTHVAGSDADDV.

The Yippee domain maps to 12-109 (KIYSCKHCGT…LERFKITGPD (98 aa)). The Zn(2+) site is built by C16, C19, C72, and C75.

Belongs to the yippee family.

The polypeptide is Protein yippee-like (Solanum tuberosum (Potato)).